Here is a 262-residue protein sequence, read N- to C-terminus: 5'-nucleotidase SurE (262 aa).

Asp8, Asp9, Ser39, and Asn95 together coordinate a divalent metal cation.

The protein belongs to the SurE nucleotidase family. A divalent metal cation is required as a cofactor.

It localises to the cytoplasm. The catalysed reaction is a ribonucleoside 5'-phosphate + H2O = a ribonucleoside + phosphate. Functionally, nucleotidase that shows phosphatase activity on nucleoside 5'-monophosphates. The chain is 5'-nucleotidase SurE from Methanothermobacter thermautotrophicus (strain ATCC 29096 / DSM 1053 / JCM 10044 / NBRC 100330 / Delta H) (Methanobacterium thermoautotrophicum).